Reading from the N-terminus, the 367-residue chain is Peptide chain release factor 1 (367 aa).

An N5-methylglutamine modification is found at glutamine 243.

This sequence belongs to the prokaryotic/mitochondrial release factor family. Methylated by PrmC. Methylation increases the termination efficiency of RF1.

Its subcellular location is the cytoplasm. Functionally, peptide chain release factor 1 directs the termination of translation in response to the peptide chain termination codons UAG and UAA. The protein is Peptide chain release factor 1 of Acidovorax ebreus (strain TPSY) (Diaphorobacter sp. (strain TPSY)).